We begin with the raw amino-acid sequence, 307 residues long: MEADKDDTQQILKEHSPDEFIKDEQNKGLIDEITKKNIQLKKEIQKLETELQEATKEFQIKEDIPETKMKFLSVETPENDSQLSNISCSFQVSSKVPYEIQKGQALITFEKEEVAQNVVSMSKHHVQIKDVNLEVTAKPVPLNSGVRFQVYVEVSKMKINVTEIPDTLREDQMRDKLELSFSKSRNGGGEVDRVDYDRQSGSAVITFVEIGVADKILKKKEYPLYINQTCHRVTVSPYTEIHLKKYQIFSGTSKRTVLLTGMEGIQMDEEIVEDLINIHFQRAKNGGGEVDVVKCSLGQPHIAYFEE.

The tract at residues 1–24 (MEADKDDTQQILKEHSPDEFIKDE) is disordered. Ser16 carries the phosphoserine modification. Lys22 participates in a covalent cross-link: Glycyl lysine isopeptide (Lys-Gly) (interchain with G-Cter in ubiquitin). A coiled-coil region spans residues 30–64 (IDEITKKNIQLKKEIQKLETELQEATKEFQIKEDI). NID domains are found at residues 103-192 (GQAL…GEVD) and 201-292 (GSAV…EVDV).

It belongs to the NMI family. As to quaternary structure, interacts with MYCN and MYC, as well as with other transcription factors with a Zip, HLH or a HLH-Zip motif. Interacts with all STAT proteins except STAT2. Interacts with IRF7, the interaction is direct and leads to the inhibition of IRF7-mediated type I IFN production. Interacts (via coiled-coil domain) with TRIM21 (via the SPRY domain); the interaction leads to 'Lys-63'-linked ubiquitination of NMI. Interacts with IFI35; the interaction is direct and is facilitated by TRIM21. Interacts with TLR4; the interaction is direct and leads to NF-kappa-B activation. (Microbial infection) Interacts with human cytomegalovirus protein UL23; this interaction inhibits NMI-mediated transcription of interferon-gamma stimulated genes. In terms of processing, ubiquitinated. 'Lys-63'-linked ubiquitination by TRIM21 promotes interaction with IFI35 and inhibits virus-triggered type I IFN-beta production. Expressed in adult spleen, liver, and kidney. Expressed in fetal thymus, liver, placenta, spleen, lung, and kidney but not brain. Expressed in macrophages.

It localises to the cytoplasm. Its subcellular location is the nucleus. It is found in the secreted. Acts as a signaling pathway regulator involved in innate immune system response. In response to interleukin 2/IL2 and interferon IFN-gamma/IFNG, interacts with signal transducer and activator of transcription/STAT which activate the transcription of downstream genes involved in a multitude of signals for development and homeostasis. Enhances the recruitment of CBP/p300 coactivators to STAT1 and STAT5, resulting in increased STAT1- and STAT5-dependent transcription. In response to interferon IFN-alpha, associates in a complex with signaling pathway regulator IFI35 to regulate immune response; the complex formation prevents proteasome-mediated degradation of IFI35. In complex with IFI35, inhibits virus-triggered type I IFN-beta production when ubiquitinated by ubiquitin-protein ligase TRIM21. In complex with IFI35, negatively regulates nuclear factor NF-kappa-B signaling by inhibiting the nuclear translocation, activation and transcription of NF-kappa-B subunit p65/RELA, resulting in the inhibition of endothelial cell proliferation, migration and re-endothelialization of injured arteries. Negatively regulates virus-triggered type I interferon/IFN production by inducing proteosome-dependent degradation of IRF7, a transcriptional regulator of type I IFN, thereby interfering with cellular antiviral responses. Beside its role as an intracellular signaling pathway regulator, also functions extracellularly as damage-associated molecular patterns (DAMPs) to promote inflammation, when actively released by macrophage to the extracellular space during cell injury or pathogen invasion. Macrophage-secreted NMI activates NF-kappa-B signaling in adjacent macrophages through Toll-like receptor 4/TLR4 binding and activation, thereby inducing NF-kappa-B translocation from the cytoplasm into the nucleus which promotes the release of pro-inflammatory cytokines. This Homo sapiens (Human) protein is N-myc-interactor.